Consider the following 286-residue polypeptide: Acetyl-coenzyme A carboxylase carboxyl transferase subunit beta (286 aa).

Residues L28–K286 enclose the CoA carboxyltransferase N-terminal domain. 4 residues coordinate Zn(2+): C32, C35, C51, and C54. A C4-type zinc finger spans residues C32–C54.

It belongs to the AccD/PCCB family. In terms of assembly, acetyl-CoA carboxylase is a heterohexamer composed of biotin carboxyl carrier protein (AccB), biotin carboxylase (AccC) and two subunits each of ACCase subunit alpha (AccA) and ACCase subunit beta (AccD). It depends on Zn(2+) as a cofactor.

The protein localises to the cytoplasm. The enzyme catalyses N(6)-carboxybiotinyl-L-lysyl-[protein] + acetyl-CoA = N(6)-biotinyl-L-lysyl-[protein] + malonyl-CoA. It participates in lipid metabolism; malonyl-CoA biosynthesis; malonyl-CoA from acetyl-CoA: step 1/1. Functionally, component of the acetyl coenzyme A carboxylase (ACC) complex. Biotin carboxylase (BC) catalyzes the carboxylation of biotin on its carrier protein (BCCP) and then the CO(2) group is transferred by the transcarboxylase to acetyl-CoA to form malonyl-CoA. This chain is Acetyl-coenzyme A carboxylase carboxyl transferase subunit beta, found in Oceanobacillus iheyensis (strain DSM 14371 / CIP 107618 / JCM 11309 / KCTC 3954 / HTE831).